We begin with the raw amino-acid sequence, 84 residues long: Cell division topological specificity factor (84 aa).

The protein belongs to the MinE family.

Its function is as follows. Prevents the cell division inhibition by proteins MinC and MinD at internal division sites while permitting inhibition at polar sites. This ensures cell division at the proper site by restricting the formation of a division septum at the midpoint of the long axis of the cell. This is Cell division topological specificity factor from Burkholderia multivorans (strain ATCC 17616 / 249).